Here is a 336-residue protein sequence, read N- to C-terminus: Eukaryotic translation initiation factor 3 subunit I (336 aa).

5 WD repeats span residues 8–47 (GHER…RLGT), 50–91 (GHLG…KVWE), 146–185 (CTES…QLEN), 190–229 (EFDH…ILKT), and 287–326 (GHFG…FDFM).

The protein belongs to the eIF-3 subunit I family. In terms of assembly, component of the eukaryotic translation initiation factor 3 (eIF-3) complex.

The protein resides in the cytoplasm. Functionally, component of the eukaryotic translation initiation factor 3 (eIF-3) complex, which is involved in protein synthesis of a specialized repertoire of mRNAs and, together with other initiation factors, stimulates binding of mRNA and methionyl-tRNAi to the 40S ribosome. The eIF-3 complex specifically targets and initiates translation of a subset of mRNAs involved in cell proliferation. The protein is Eukaryotic translation initiation factor 3 subunit I (tif34) of Emericella nidulans (strain FGSC A4 / ATCC 38163 / CBS 112.46 / NRRL 194 / M139) (Aspergillus nidulans).